We begin with the raw amino-acid sequence, 81 residues long: Putative defensin-like protein 31 (81 aa).

An N-terminal signal peptide occupies residues 1–26; the sequence is MTSSSKCLFFVFLCLAALLTPYLAEA. 3 disulfides stabilise this stretch: Cys-38/Cys-58, Cys-44/Cys-70, and Cys-48/Cys-72.

The protein belongs to the DEFL family.

Its subcellular location is the secreted. This Arabidopsis thaliana (Mouse-ear cress) protein is Putative defensin-like protein 31.